The primary structure comprises 395 residues: Elongation factor Tu (395 aa).

The tr-type G domain maps to 10 to 204 (KPHVNIGTIG…EVDAYIPTPE (195 aa)). The segment at 19 to 26 (GHVDHGKT) is G1. Residue 19–26 (GHVDHGKT) participates in GTP binding. T26 contributes to the Mg(2+) binding site. Positions 60 to 64 (GITIS) are G2. The segment at 81-84 (DCPG) is G3. Residues 81 to 85 (DCPGH) and 136 to 139 (NKCD) each bind GTP. A G4 region spans residues 136-139 (NKCD). The G5 stretch occupies residues 174-176 (SAL).

The protein belongs to the TRAFAC class translation factor GTPase superfamily. Classic translation factor GTPase family. EF-Tu/EF-1A subfamily. In terms of assembly, monomer.

It localises to the cytoplasm. It carries out the reaction GTP + H2O = GDP + phosphate + H(+). GTP hydrolase that promotes the GTP-dependent binding of aminoacyl-tRNA to the A-site of ribosomes during protein biosynthesis. This Bacillus cereus (strain ATCC 10987 / NRS 248) protein is Elongation factor Tu.